Here is a 60-residue protein sequence, read N- to C-terminus: Metallothionein (60 aa).

Methionine 1 is modified (N-acetylmethionine). The beta stretch occupies residues 1–28; the sequence is MDPCECSKTGTCNCGGSCTCKNCSCTTC. A divalent metal cation contacts are provided by cysteine 4, cysteine 6, cysteine 12, cysteine 14, cysteine 18, cysteine 20, cysteine 23, cysteine 25, cysteine 28, cysteine 32, cysteine 33, cysteine 35, cysteine 36, cysteine 40, cysteine 43, cysteine 47, cysteine 49, cysteine 54, cysteine 58, and cysteine 59. The interval 29–60 is alpha; the sequence is NKSCCPCCPSGCPKCASGCVCKGKTCDTSCCQ.

The protein belongs to the metallothionein superfamily. Type 1 family.

Metallothioneins have a high content of cysteine residues that bind various heavy metals. This Pleuronectes platessa (European plaice) protein is Metallothionein (mt).